We begin with the raw amino-acid sequence, 465 residues long: Tapasin (465 aa).

An N-terminal signal peptide occupies residues 1–23 (MKPLLLLVAVALGLATVVSVVSA). Topologically, residues 24 to 416 (GPEAIECWFV…GFSGPSIEDG (393 aa)) are lumenal. Cys30 and Cys94 are oxidised to a cystine. Asn256 is a glycosylation site (N-linked (GlcNAc...) asparagine). Residues 295-402 (PRVSLTPAPV…PASGRSADVT (108 aa)) form the Ig-like C1-type domain. A disulfide bridge links Cys318 with Cys385. The helical transmembrane segment at 417 to 437 (IGLFLSAFLLLGLLKVLGWLA) threads the bilayer. Over 438 to 465 (AYWTIPEVSKEKATAASLTIPRNSKKSQ) the chain is Cytoplasmic.

In terms of assembly, heterodimer with PDIA3; disulfide-linked. Obligatory mediator for the interaction between newly assembled MHC class I molecules, calreticulin, PDIA3 and TAP. Up to 4 MHC class I/tapasin complexes bind to 1 TAP. Interacts with HLA-G-B2M complex; this interaction is required for loading of high affinity peptides. On its own or as part of MHC class I peptide loading complex, interacts with ligand-free MR1 or MR1-B2M complex, providing for stable MR1 pools ready for metabolite antigen processing.

It is found in the endoplasmic reticulum membrane. Its function is as follows. Involved in the association of MHC class I with transporter associated with antigen processing (TAP) and in the assembly of MHC class I with peptide (peptide loading). This Mus musculus (Mouse) protein is Tapasin (Tapbp).